Consider the following 585-residue polypeptide: Protein FAM151A (585 aa).

The chain crosses the membrane as a helical span at residues 14-34; the sequence is WVFAGITCVSVVVIAAIVLAI.

It belongs to the menorin family.

Its subcellular location is the membrane. The polypeptide is Protein FAM151A (FAM151A) (Homo sapiens (Human)).